The chain runs to 126 residues: Anti-adapter protein IraD (126 aa).

Belongs to the GpW/Gp25 family. IraD subfamily. Interacts with RssB.

The protein resides in the cytoplasm. Inhibits RpoS proteolysis by regulating RssB activity, thereby increasing the stability of the sigma stress factor RpoS during oxidative stress. Its effect on RpoS stability is due to its interaction with RssB, which probably blocks the interaction of RssB with RpoS, and the consequent delivery of the RssB-RpoS complex to the ClpXP protein degradation pathway. This chain is Anti-adapter protein IraD, found in Salmonella enteritidis PT4 (strain P125109).